Consider the following 190-residue polypeptide: Potassium-transporting ATPase KdpC subunit (190 aa).

Residues 10–30 traverse the membrane as a helical segment; the sequence is TFIFLLLITGGVYPLLTTALG.

The protein belongs to the KdpC family. The system is composed of three essential subunits: KdpA, KdpB and KdpC.

The protein resides in the cell inner membrane. Its function is as follows. Part of the high-affinity ATP-driven potassium transport (or Kdp) system, which catalyzes the hydrolysis of ATP coupled with the electrogenic transport of potassium into the cytoplasm. This subunit acts as a catalytic chaperone that increases the ATP-binding affinity of the ATP-hydrolyzing subunit KdpB by the formation of a transient KdpB/KdpC/ATP ternary complex. This chain is Potassium-transporting ATPase KdpC subunit, found in Escherichia coli O157:H7.